The following is a 124-amino-acid chain: Glycine cleavage system H protein (124 aa).

The Lipoyl-binding domain maps to 19 to 101 (TGTVGITDYA…AGKGWFLQIK (83 aa)). An N6-lipoyllysine modification is found at lysine 60.

The protein belongs to the GcvH family. The glycine cleavage system is composed of four proteins: P, T, L and H. It depends on (R)-lipoate as a cofactor.

The glycine cleavage system catalyzes the degradation of glycine. The H protein shuttles the methylamine group of glycine from the P protein to the T protein. In Beijerinckia indica subsp. indica (strain ATCC 9039 / DSM 1715 / NCIMB 8712), this protein is Glycine cleavage system H protein.